The primary structure comprises 310 residues: Thioredoxin reductase (310 aa).

34–41 (NGMQPGGQ) contacts FAD. Cysteines 135 and 138 form a disulfide. An FAD-binding site is contributed by 281–290 (DVQDKIYRQA).

Belongs to the class-II pyridine nucleotide-disulfide oxidoreductase family. As to quaternary structure, homodimer. Requires FAD as cofactor.

The protein resides in the cytoplasm. The enzyme catalyses [thioredoxin]-dithiol + NADP(+) = [thioredoxin]-disulfide + NADPH + H(+). In Rickettsia prowazekii (strain Madrid E), this protein is Thioredoxin reductase (trxB).